A 177-amino-acid chain; its full sequence is FMRFamide-like neuropeptides 7 (177 aa).

The N-terminal stretch at 1–19 (MLGSRFLLLALGLLVLVLA) is a signal peptide. A propeptide spanning residues 20-49 (EESAEQQVQEPTELEKSGEQLSEEDLIDEQ) is cleaved from the precursor. Residues 25–106 (QQVQEPTELE…RSSMVRFGKR (82 aa)) form a disordered region. A phenylalanine amide mark is found at F62, F75, F89, F103, F117, and F130. At L143 the chain carries Leucine amide. The residue at position 157 (F157) is a Phenylalanine amide. Residues 161–177 (SMEFEMQSNEKNIEDSE) constitute a propeptide that is removed on maturation.

It belongs to the FARP (FMRFamide related peptide) family. As to expression, expressed in the ASI sensory neurons, the ALA interneuron and the AVG interneuron from where secretion occurs. Expression in the ASI neurons is necessary and sufficient to maintain serotonin-induced fat loss.

The protein resides in the secreted. FMRFamide-like neuropeptides. Stimulates serotonin-induced fat loss by binding to and activating the npr-22 receptor which leads to induction of the atgl-1 lipase and subsequent fat loss. Together with atfs-1, negatively regulates the expression of the transcription regulator hlh-11, to promote expression of atgl-1, and thus atgl-1-dependent fat oxidation in response to mitochondrial stress. Functionally, TPMQRSSMVRF-amide: Acts as a ligand for the npr-22 receptor in vitro. In terms of biological role, SPMQRSSMVRF-amide: Acts as a ligand for the npr-22 receptor in vitro. Its function is as follows. Acts as a ligand for the npr-22 receptor in vitro. This Caenorhabditis elegans protein is FMRFamide-like neuropeptides 7.